A 302-amino-acid chain; its full sequence is Small ribosomal subunit biogenesis GTPase RsgA (302 aa).

The CP-type G domain maps to 69 to 229 (KNLLIRPKVA…VGDTPGFSKV (161 aa)). GTP is bound by residues 118-121 (NKID) and 172-180 (GPSGVGKSS). The Zn(2+) site is built by C252, C257, H259, and C265.

It belongs to the TRAFAC class YlqF/YawG GTPase family. RsgA subfamily. In terms of assembly, monomer. Associates with 30S ribosomal subunit, binds 16S rRNA. Zn(2+) serves as cofactor.

It is found in the cytoplasm. Functionally, one of several proteins that assist in the late maturation steps of the functional core of the 30S ribosomal subunit. Helps release RbfA from mature subunits. May play a role in the assembly of ribosomal proteins into the subunit. Circularly permuted GTPase that catalyzes slow GTP hydrolysis, GTPase activity is stimulated by the 30S ribosomal subunit. The protein is Small ribosomal subunit biogenesis GTPase RsgA of Aquifex aeolicus (strain VF5).